A 380-amino-acid chain; its full sequence is Cytochrome b (380 aa).

A run of 4 helical transmembrane segments spans residues 34-54, 78-99, 114-134, and 179-199; these read FGSLLGICLATQILTGLLLAA, WLIRNLHANGASFFFICIYLHI, WNTGVILLLTLMATAFVGYVL, and FFTLHFLLPFMIMGLTLIHLT. 2 residues coordinate heme b: histidine 84 and histidine 98. Residues histidine 183 and histidine 197 each contribute to the heme b site. A ubiquinone is bound at residue histidine 202. Helical transmembrane passes span 227–247, 289–309, 321–341, and 348–368; these read LKDILGFMLMLFPLMTLALFS, LGGVLALAASVLILFLAPLLH, FSQLLFWTLAANLLILTWVGS, and FIIIGQLASLTYFTILLILFP.

Belongs to the cytochrome b family. As to quaternary structure, the cytochrome bc1 complex contains 11 subunits: 3 respiratory subunits (MT-CYB, CYC1 and UQCRFS1), 2 core proteins (UQCRC1 and UQCRC2) and 6 low-molecular weight proteins (UQCRH/QCR6, UQCRB/QCR7, UQCRQ/QCR8, UQCR10/QCR9, UQCR11/QCR10 and a cleavage product of UQCRFS1). This cytochrome bc1 complex then forms a dimer. The cofactor is heme b.

The protein resides in the mitochondrion inner membrane. In terms of biological role, component of the ubiquinol-cytochrome c reductase complex (complex III or cytochrome b-c1 complex) that is part of the mitochondrial respiratory chain. The b-c1 complex mediates electron transfer from ubiquinol to cytochrome c. Contributes to the generation of a proton gradient across the mitochondrial membrane that is then used for ATP synthesis. The sequence is that of Cytochrome b (MT-CYB) from Antigone vipio (White-naped crane).